The following is a 260-amino-acid chain: POLG alternative reading frame (260 aa).

Disordered stretches follow at residues 1–50 (MEPK…LRPR) and 108–219 (ARRG…RRGG). Composition is skewed to low complexity over residues 36–48 (AGSS…LQLR), 116–154 (GRGA…GQPG), and 164–186 (AEPA…EAPG). The segment at 104 to 130 (ANLRARRGDAWRGRGAPQRRAPAEARA) is required for nucleolar localization. Gly residues-rich tracts occupy residues 187 to 199 (LGLG…VRPR) and 209 to 219 (RGAGPGVRRGG).

In terms of assembly, interacts with C1QBP; the interaction results in nucleolar localization of C1QBP, probably due to prevention of C1QBP maturation and redirection from mitochondria to nucleoli. Undergoes proteolytic cleavage to produce a secreted C-terminal fragment.

The protein resides in the nucleus. The protein localises to the nucleolus. It localises to the secreted. This is POLG alternative reading frame from Homo sapiens (Human).